The primary structure comprises 162 residues: Ribose-5-phosphate isomerase B (162 aa).

D-ribulose 5-phosphate-binding positions include 11–12 (DH) and 70–74 (GSGNG). The active-site Proton acceptor is glutamate 75. The Proton donor role is filled by histidine 102. Positions 103, 113, 137, and 141 each coordinate D-ribulose 5-phosphate.

Belongs to the LacAB/RpiB family. As to quaternary structure, homodimer.

It carries out the reaction aldehydo-D-ribose 5-phosphate = D-ribulose 5-phosphate. It functions in the pathway carbohydrate degradation; pentose phosphate pathway; D-ribose 5-phosphate from D-ribulose 5-phosphate (non-oxidative stage): step 1/1. In terms of biological role, catalyzes the interconversion of ribulose-5-P and ribose-5-P. The protein is Ribose-5-phosphate isomerase B of Mycobacterium leprae (strain TN).